The following is a 393-amino-acid chain: Double-stranded RNA-binding protein 5 (393 aa).

DRBM domains are found at residues 1–70 (MYKN…VLSS) and 87–155 (IYKN…SLKK). Disordered regions lie at residues 220–251 (ASSSSSTSTPNQHKNSSFISLIPPPPPPKSSK) and 335–371 (NPNLNPSSLSSSVNEFTSSNNSCSVLNTPGLGGQEKK). The segment covering 347 to 361 (VNEFTSSNNSCSVLN) has biased composition (polar residues).

As to quaternary structure, heterodimer with DRB1, DRB2 or DRB4. Interacts with DCL1 and DCL3. In terms of tissue distribution, expressed in the shoot apical meristem (SAM).

Binds double-stranded RNA. May be involved in RNA-mediated silencing. The polypeptide is Double-stranded RNA-binding protein 5 (DRB5) (Arabidopsis thaliana (Mouse-ear cress)).